Consider the following 368-residue polypeptide: Alanine racemase (368 aa).

The Proton acceptor; specific for D-alanine role is filled by lysine 35. Lysine 35 bears the N6-(pyridoxal phosphate)lysine mark. Residue arginine 130 coordinates substrate. Tyrosine 253 functions as the Proton acceptor; specific for L-alanine in the catalytic mechanism. Substrate is bound at residue methionine 305.

Belongs to the alanine racemase family. It depends on pyridoxal 5'-phosphate as a cofactor.

It carries out the reaction L-alanine = D-alanine. The protein operates within amino-acid biosynthesis; D-alanine biosynthesis; D-alanine from L-alanine: step 1/1. Its function is as follows. Catalyzes the interconversion of L-alanine and D-alanine. May also act on other amino acids. This is Alanine racemase (alr) from Cupriavidus metallidurans (strain ATCC 43123 / DSM 2839 / NBRC 102507 / CH34) (Ralstonia metallidurans).